A 154-amino-acid chain; its full sequence is Large ribosomal subunit protein uL13 (154 aa).

The protein belongs to the universal ribosomal protein uL13 family. As to quaternary structure, part of the 50S ribosomal subunit.

In terms of biological role, this protein is one of the early assembly proteins of the 50S ribosomal subunit, although it is not seen to bind rRNA by itself. It is important during the early stages of 50S assembly. The polypeptide is Large ribosomal subunit protein uL13 (Brucella melitensis biotype 2 (strain ATCC 23457)).